We begin with the raw amino-acid sequence, 400 residues long: Argininosuccinate synthase (400 aa).

Residues 10–18 and alanine 38 each bind ATP; that span reads AYSGGVDTS. Tyrosine 89 contributes to the L-citrulline binding site. Position 119 (glycine 119) interacts with ATP. The L-aspartate site is built by threonine 121, asparagine 125, and aspartate 126. Asparagine 125 contacts L-citrulline. L-citrulline-binding residues include arginine 129, serine 177, serine 186, glutamate 262, and tyrosine 274.

This sequence belongs to the argininosuccinate synthase family. Type 1 subfamily. Homotetramer.

It is found in the cytoplasm. The catalysed reaction is L-citrulline + L-aspartate + ATP = 2-(N(omega)-L-arginino)succinate + AMP + diphosphate + H(+). It participates in amino-acid biosynthesis; L-arginine biosynthesis; L-arginine from L-ornithine and carbamoyl phosphate: step 2/3. This Synechococcus elongatus (strain ATCC 33912 / PCC 7942 / FACHB-805) (Anacystis nidulans R2) protein is Argininosuccinate synthase.